Here is a 292-residue protein sequence, read N- to C-terminus: uncharacterized protein (292 aa).

A helical transmembrane segment spans residues 66–86 (LFFYLLFWWTYLTIVVLLTVP).

The protein resides in the host membrane. This is an uncharacterized protein from Alcelaphine herpesvirus 1 (strain C500) (AlHV-1).